Reading from the N-terminus, the 178-residue chain is Large ribosomal subunit protein bL25 (178 aa).

It belongs to the bacterial ribosomal protein bL25 family. CTC subfamily. As to quaternary structure, part of the 50S ribosomal subunit; part of the 5S rRNA/L5/L18/L25 subcomplex. Contacts the 5S rRNA. Binds to the 5S rRNA independently of L5 and L18.

Functionally, this is one of the proteins that binds to the 5S RNA in the ribosome where it forms part of the central protuberance. This Campylobacter jejuni subsp. jejuni serotype O:23/36 (strain 81-176) protein is Large ribosomal subunit protein bL25.